The following is a 221-amino-acid chain: GTP cyclohydrolase 1 (221 aa).

The Zn(2+) site is built by C109, H112, and C180.

The protein belongs to the GTP cyclohydrolase I family. Toroid-shaped homodecamer, composed of two pentamers of five dimers.

It catalyses the reaction GTP + H2O = 7,8-dihydroneopterin 3'-triphosphate + formate + H(+). Its pathway is cofactor biosynthesis; 7,8-dihydroneopterin triphosphate biosynthesis; 7,8-dihydroneopterin triphosphate from GTP: step 1/1. In Sodalis glossinidius (strain morsitans), this protein is GTP cyclohydrolase 1.